Reading from the N-terminus, the 784-residue chain is LPS-assembly protein LptD (784 aa).

An N-terminal signal peptide occupies residues 1–24; it reads MKKRIPTLLATMIATALYSQQGLA. 2 cysteine pairs are disulfide-bonded: Cys31/Cys724 and Cys173/Cys725.

Belongs to the LptD family. As to quaternary structure, component of the lipopolysaccharide transport and assembly complex. Interacts with LptE and LptA. Contains two intramolecular disulfide bonds.

It localises to the cell outer membrane. Functionally, together with LptE, is involved in the assembly of lipopolysaccharide (LPS) at the surface of the outer membrane. This is LPS-assembly protein LptD from Shigella flexneri.